Consider the following 422-residue polypeptide: Validoxylamine A glucosyltransferase (422 aa).

The protein belongs to the glycosyltransferase 2 family. Mn(2+) is required as a cofactor.

It carries out the reaction validoxylamine A + UDP-alpha-D-glucose = validamycin A + UDP + H(+). Involved in the biosynthesis of the antifungal agent validamycin A. Catalyzes the final attachment of glucose from UDP-alpha-D-glucose to validoxylamine A to yield validamycin A. UDP-glucose is the most efficient glycosyl donor, whereas GDP-glucose and ADP-glucose are much less efficient. ValG also utilizes UDP-galactose as substrate to produce the new validamycin analog, 4''-epi-validamycin A. In Streptomyces hygroscopicus subsp. jinggangensis (strain 5008), this protein is Validoxylamine A glucosyltransferase.